A 616-amino-acid polypeptide reads, in one-letter code: Chaperone protein HscA (616 aa).

This sequence belongs to the heat shock protein 70 family.

Chaperone involved in the maturation of iron-sulfur cluster-containing proteins. Has a low intrinsic ATPase activity which is markedly stimulated by HscB. Involved in the maturation of IscU. In Edwardsiella ictaluri (strain 93-146), this protein is Chaperone protein HscA.